A 118-amino-acid chain; its full sequence is Holo-[acyl-carrier-protein] synthase (118 aa).

Mg(2+)-binding residues include D5 and E50.

This sequence belongs to the P-Pant transferase superfamily. AcpS family. Requires Mg(2+) as cofactor.

It localises to the cytoplasm. The enzyme catalyses apo-[ACP] + CoA = holo-[ACP] + adenosine 3',5'-bisphosphate + H(+). Transfers the 4'-phosphopantetheine moiety from coenzyme A to a Ser of acyl-carrier-protein. This Aliarcobacter butzleri (strain RM4018) (Arcobacter butzleri) protein is Holo-[acyl-carrier-protein] synthase.